A 374-amino-acid chain; its full sequence is Golgi-associated kinase 1B (374 aa).

The Cytoplasmic segment spans residues Met1–Arg38. A helical; Signal-anchor for type II membrane protein membrane pass occupies residues Ala39–Gly61. The Extracellular segment spans residues Ser62–Arg374. A compositionally biased stretch (basic residues) spans Val136–Ala146. Positions Val136–Ser177 are disordered. Residues Val166–Ser177 are compositionally biased toward polar residues. N-linked (GlcNAc...) asparagine glycans are attached at residues Asn281 and Asn314.

The protein belongs to the GASK family.

The protein localises to the golgi apparatus membrane. The protein is Golgi-associated kinase 1B of Xenopus laevis (African clawed frog).